The primary structure comprises 204 residues: Urease accessory protein UreE (204 aa).

Basic and acidic residues predominate over residues 172 to 190 (HGHAHSHDHDHDHDHDHQH). The disordered stretch occupies residues 172–204 (HGHAHSHDHDHDHDHDHQHGPGCTHGHHGHDHH).

The protein belongs to the UreE family.

It is found in the cytoplasm. Involved in urease metallocenter assembly. Binds nickel. Probably functions as a nickel donor during metallocenter assembly. The protein is Urease accessory protein UreE of Burkholderia orbicola (strain AU 1054).